Here is a 475-residue protein sequence, read N- to C-terminus: Putative aldehyde dehydrogenase (475 aa).

Residues 146 to 147 (WN) and 223 to 224 (GS) each bind NAD(+). The Proton acceptor role is filled by Glu-245. Leu-246 provides a ligand contact to NAD(+). Cys-279 functions as the Nucleophile in the catalytic mechanism. Residue Glu-379 coordinates NAD(+).

This sequence belongs to the aldehyde dehydrogenase family.

The catalysed reaction is an aldehyde + NAD(+) + H2O = a carboxylate + NADH + 2 H(+). This is Putative aldehyde dehydrogenase from Staphylococcus aureus (strain MSSA476).